Consider the following 515-residue polypeptide: Histidine ammonia-lyase (515 aa).

Positions Ala-142 to Gly-144 form a cross-link, 5-imidazolinone (Ala-Gly). Residue Ser-143 is modified to 2,3-didehydroalanine (Ser).

It belongs to the PAL/histidase family. In terms of processing, contains an active site 4-methylidene-imidazol-5-one (MIO), which is formed autocatalytically by cyclization and dehydration of residues Ala-Ser-Gly.

It is found in the cytoplasm. It carries out the reaction L-histidine = trans-urocanate + NH4(+). It functions in the pathway amino-acid degradation; L-histidine degradation into L-glutamate; N-formimidoyl-L-glutamate from L-histidine: step 1/3. This Methylobacterium nodulans (strain LMG 21967 / CNCM I-2342 / ORS 2060) protein is Histidine ammonia-lyase.